The following is a 203-amino-acid chain: NAD(P)H dehydrogenase (quinone) (203 aa).

The region spanning 3 to 194 is the Flavodoxin-like domain; sequence IMVVYYSAYG…AGANFQGRHV (192 aa). Residues 9–14 and 82–84 each bind FMN; these read SAYGHV and ARF. Residue tyrosine 11 participates in NAD(+) binding. Residue tryptophan 102 coordinates substrate. FMN is bound by residues 117–123 and histidine 138; that span reads STGTQHG.

Belongs to the WrbA family. It depends on FMN as a cofactor.

It catalyses the reaction a quinone + NADH + H(+) = a quinol + NAD(+). The enzyme catalyses a quinone + NADPH + H(+) = a quinol + NADP(+). This is NAD(P)H dehydrogenase (quinone) from Syntrophus aciditrophicus (strain SB).